The following is a 158-amino-acid chain: Small ribosomal subunit protein uS9 (158 aa).

The protein belongs to the universal ribosomal protein uS9 family.

This chain is Small ribosomal subunit protein uS9, found in Brucella anthropi (strain ATCC 49188 / DSM 6882 / CCUG 24695 / JCM 21032 / LMG 3331 / NBRC 15819 / NCTC 12168 / Alc 37) (Ochrobactrum anthropi).